Consider the following 719-residue polypeptide: UvrABC system protein B (719 aa).

In terms of domain architecture, Helicase ATP-binding spans 49 to 435 (RRINAGERDV…TGGEFVEQVI (387 aa)). 62-69 (GATGTGKS) contributes to the ATP binding site. Residues 115–138 (YYDYYQPEAYIAQTDTYIEKDSSI) carry the Beta-hairpin motif. Residues 453 to 606 (QIDDLIGEIR…QIAYNEANGI (154 aa)) form the Helicase C-terminal domain. The segment at 635-654 (GGSGRNASRGRRAQGEPGRA) is disordered. Residues 674–709 (ADLIKDLTAQMMAAARDLQFELAARFRDEIADLKRE) form the UVR domain.

The protein belongs to the UvrB family. In terms of assembly, forms a heterotetramer with UvrA during the search for lesions. Interacts with UvrC in an incision complex.

It localises to the cytoplasm. Its function is as follows. The UvrABC repair system catalyzes the recognition and processing of DNA lesions. A damage recognition complex composed of 2 UvrA and 2 UvrB subunits scans DNA for abnormalities. Upon binding of the UvrA(2)B(2) complex to a putative damaged site, the DNA wraps around one UvrB monomer. DNA wrap is dependent on ATP binding by UvrB and probably causes local melting of the DNA helix, facilitating insertion of UvrB beta-hairpin between the DNA strands. Then UvrB probes one DNA strand for the presence of a lesion. If a lesion is found the UvrA subunits dissociate and the UvrB-DNA preincision complex is formed. This complex is subsequently bound by UvrC and the second UvrB is released. If no lesion is found, the DNA wraps around the other UvrB subunit that will check the other stand for damage. This is UvrABC system protein B from Mycobacterium tuberculosis (strain CDC 1551 / Oshkosh).